A 108-amino-acid polypeptide reads, in one-letter code: MNIMSSLTNAGRGVVNTVGGAAQGINSVKSSADRNIALTKNTGSTDSIDATRSSISKGDAKSAELDGTANEENGLLRETSMLAGFEDKKEALSNQIVASKIRNSVVQF.

A compositionally biased stretch (polar residues) spans 41–56; the sequence is NTGSTDSIDATRSSIS. Residues 41–72 form a disordered region; it reads NTGSTDSIDATRSSISKGDAKSAELDGTANEE.

Belongs to the HrpA type 1 family.

It is found in the secreted. Its subcellular location is the fimbrium. Functionally, major structural protein of the hrp pilus, which is a component of the type III secretion system (T3SS, Hrp secretion system) required for effector protein delivery, parasitism, and pathogenicity. The hrp pilus functions as a conduit for protein delivery into the host cell. Also, affects the expression of T3SS-associated genes. Required for full expression of genes that encode regulatory, secretion, and effector proteins of the T3SS. HrpA-mediated gene regulation apparently is through effect on the mRNA level of hrpR and hrpS. This chain is Hrp pili protein HrpA (hrpA), found in Pseudomonas savastanoi pv. phaseolicola (Pseudomonas syringae pv. phaseolicola).